The following is a 386-amino-acid chain: Putative 8-amino-7-oxononanoate synthase (386 aa).

Position 22 (Arg22) interacts with substrate. Gly109–Tyr110 is a pyridoxal 5'-phosphate binding site. His134 contributes to the substrate binding site. Residues Ser182, Asp207 to His210, and Thr238 to Lys241 each bind pyridoxal 5'-phosphate. Position 241 is an N6-(pyridoxal phosphate)lysine (Lys241). A substrate-binding site is contributed by Thr356.

Belongs to the class-II pyridoxal-phosphate-dependent aminotransferase family. BioF subfamily. Homodimer. Pyridoxal 5'-phosphate serves as cofactor.

The enzyme catalyses 6-carboxyhexanoyl-[ACP] + L-alanine + H(+) = (8S)-8-amino-7-oxononanoate + holo-[ACP] + CO2. It participates in cofactor biosynthesis; biotin biosynthesis. Functionally, catalyzes the decarboxylative condensation of pimeloyl-[acyl-carrier protein] and L-alanine to produce 8-amino-7-oxononanoate (AON), [acyl-carrier protein], and carbon dioxide. The chain is Putative 8-amino-7-oxononanoate synthase (bioF) from Trichormus variabilis (strain ATCC 29413 / PCC 7937) (Anabaena variabilis).